Reading from the N-terminus, the 819-residue chain is Mitosis inhibitor protein kinase SWE1 (819 aa).

The residue at position 36 (S36) is a Phosphoserine; by CDC5. Residue T45 is modified to Phosphothreonine; by CDC28. Phosphoserine; by CDC28 occurs at positions 56 and 63. S70 is subject to Phosphoserine. Phosphothreonine; by CDC28 is present on T74. Positions 86 to 105 (KIEEEEEEEEEGKDEESVDS) are disordered. Residues 88-102 (EEEEEEEEEGKDEES) are compositionally biased toward acidic residues. Residue S102 is modified to Phosphoserine; by CDC5. S105 carries the phosphoserine; by CDC28 modification. S111 carries the post-translational modification Phosphoserine; by CDC5, CDC28 and CLA4. The disordered stretch occupies residues 117–168 (ESVTTPITKRSAEKTNSPISLKQWNQRWFPKNDARTENTSSSSSYSVAKPNQ). S118 carries the post-translational modification Phosphoserine; by CDC5. Over residues 118 to 142 (SVTTPITKRSAEKTNSPISLKQWNQ) the composition is skewed to polar residues. T121 and T124 each carry phosphothreonine; by CDC28. Phosphoserine; by CDC28 is present on S127. The residue at position 131 (T131) is a Phosphothreonine; by CDC5. S133 carries the post-translational modification Phosphoserine; by CDC28. S136 bears the Phosphoserine; by CDC28 and CLA4 mark. Residues S156 and S169 each carry the phosphoserine; by CDC5 modification. The residue at position 196 (T196) is a Phosphothreonine; by CDC28. Phosphoserine; by CDC28 is present on S201. S225 and S254 each carry phosphoserine; by CDC5. Phosphoserine is present on S262. Phosphoserine; by CDC28 occurs at positions 263 and 266. A disordered region spans residues 278 to 297 (NQTNILSPTNSLVTNSSPQT). Position 280 is a phosphothreonine; by CDC5 (T280). 2 positions are modified to phosphoserine: S284 and S294. S312 carries the phosphoserine; by CLA4 modification. The segment at 341–395 (PIIISSHHSTRKNPQPYQFRGRYDNDTDEEISTPTRRKSIIGATSQTHRESRPLS) is disordered. A Phosphoserine modification is found at S345. Phosphothreonine; by CDC28 occurs at positions 367 and 373. S379 is subject to Phosphoserine; by CDC5 and CLA4. Phosphothreonine; by CDC28 is present on T384. Phosphoserine; by CDC5 and CLA4 is present on residues S395 and S438. The 351-residue stretch at 444–794 (FTNVHSIGKG…NQILQTEECL (351 aa)) folds into the Protein kinase domain. ATP-binding positions include 450 to 458 (IGKGQFSTV) and K473. The active-site Proton acceptor is D579. Mg(2+) is bound by residues N584 and D597. Phosphoserine; by CDC5 is present on S610. Residue T629 is modified to Phosphothreonine; by CDC5. T688 bears the Phosphothreonine; by CDC5 and CLA4 mark. T692 is modified (phosphothreonine). The segment covering 707 to 716 (SNNAGTSTVH) has biased composition (polar residues). Residues 707–736 (SNNAGTSTVHNNSNINNPNMNNGNDNNNVN) form a disordered region. Positions 717 to 736 (NNSNINNPNMNNGNDNNNVN) are enriched in low complexity. K741 participates in a covalent cross-link: Glycyl lysine isopeptide (Lys-Gly) (interchain with G-Cter in ubiquitin).

It belongs to the protein kinase superfamily. Ser/Thr protein kinase family. WEE1 subfamily. Interacts with CLB2-CDC28. Partial hyperphosphorylation of SWE1 by CLB2-CDC28 stabilizes the ternary complex of SWE1 and CLB2-CDC28 and stimulates kinase activity of SWE1 in a positive feedback loop, maintaining CLB2-CDC28 in the tyrosine-phosphorylated state. Fully hyperphosphorylated SWE1 dissociates from CLB2-CDC28. Interacts with HSL7, KCC4 and MET30. Post-translationally, ubiquitinated by the SCF(MET30) complex, leading to its degradation by the proteasome. Phosphorylated progressively by CLA4, CLB2-CDC28 and CDC5. CLA4-dependent phosphorylation occurs in late S phase, followed by phosphorylation by CLB2-CDC28 in early G2, when the levels of mitotic CLB2 increases. This phosphorylation is critical for triggering subsequent SWE1-CDC5 interaction and CDC5-dependent phosphorylation. The resulting cumulative hyperphosphorylation down-regulates SWE1 by targeting it for ubiquitin-mediated degradation. This stepwise phosphorylation is thought to be a mechanism to integrate the different checkpoint requirements before entry into mitosis.

The protein localises to the bud neck. Its subcellular location is the nucleus. It carries out the reaction L-seryl-[protein] + ATP = O-phospho-L-seryl-[protein] + ADP + H(+). It catalyses the reaction L-threonyl-[protein] + ATP = O-phospho-L-threonyl-[protein] + ADP + H(+). Protein kinase that acts as a negative regulator of entry into mitosis (G2 to M transition) by phosphorylating and inhibiting the mitosis-promoting cyclin B-bound CDC28 at 'Tyr-19'. SWE1-mediated inhibition of CDC28 acts in a cell size or morphogenesis checkpoint to delay mitosis in response to defects in growth, actin organization or bud formation. Inhibits the activity of B-type cyclins in replication initiation strongly for CLB2, moderately for CLB3 and CLB4, and there is no apparent inhibition for CLB5 and CLB6, correlating with the normal expression timing of those cyclins. Hyperphosphorylation and degradation of SWE1 when all checkpoint requirement are met releases CLB2-CDC28 from inhibition and allows for progression through the cell cycle. SWE1-dependent CDC28 phosphorylation is also required for pachytene arrest upon activation of the recombination checkpoint during meiosis. Also involved in the regulation of nitrogen starvation- and short chain alcohol-induced filamentous growth, or filamentous differentiation in response to slowed DNA synthesis. Can act both on serines and on tyrosines. This Saccharomyces cerevisiae (strain ATCC 204508 / S288c) (Baker's yeast) protein is Mitosis inhibitor protein kinase SWE1 (SWE1).